A 431-amino-acid polypeptide reads, in one-letter code: Trigger factor (431 aa).

The PPIase FKBP-type domain maps to 160–245 (DDRVTIDFVG…VKKVEVMVLP (86 aa)).

The protein belongs to the FKBP-type PPIase family. Tig subfamily.

It is found in the cytoplasm. The catalysed reaction is [protein]-peptidylproline (omega=180) = [protein]-peptidylproline (omega=0). Functionally, involved in protein export. Acts as a chaperone by maintaining the newly synthesized protein in an open conformation. Functions as a peptidyl-prolyl cis-trans isomerase. This chain is Trigger factor, found in Mannheimia succiniciproducens (strain KCTC 0769BP / MBEL55E).